Here is a 169-residue protein sequence, read N- to C-terminus: Large ribosomal subunit protein uL5 (169 aa).

Belongs to the universal ribosomal protein uL5 family. Part of the 50S ribosomal subunit; contacts the 5S rRNA and probably tRNA. Forms a bridge to the 30S subunit in the 70S ribosome.

Functionally, this is one of the proteins that bind and probably mediate the attachment of the 5S RNA into the large ribosomal subunit, where it forms part of the central protuberance. In the 70S ribosome it contacts protein S13 of the 30S subunit (bridge B1b), connecting the 2 subunits; this bridge is implicated in subunit movement. May contact the P site tRNA; the 5S rRNA and some of its associated proteins might help stabilize positioning of ribosome-bound tRNAs. This chain is Large ribosomal subunit protein uL5, found in Methanosarcina mazei (strain ATCC BAA-159 / DSM 3647 / Goe1 / Go1 / JCM 11833 / OCM 88) (Methanosarcina frisia).